The following is a 349-amino-acid chain: MEKPTRQTPFYTQHRAELLVLSSQIAAALLHALARVVEVGSGLKERVHPFTVLQIRLFITVLGCTAYLWRARIDFLGPTGLRPLLALRAAGGVFGACGFYLSISYLSLSEATVLNFIAPLGAIMLTTYWEGRTFAFLDLIACITALAGVVLVLQPIPIYKAVAQAEISSSISTDPYAHLKGVVSGITGVAGGIVAFSAMNRLGKNVQPAVTINYFGVSICIVTTAFSTIMPEVVWPTRIESWCLLAIIGILGLVMEYLLTAGLGSDDPRVTIMIYSQVLWALFLDWAIWRSHVNVLTVLGSMVVVASLAVPYLFRESSHPKEDMFSTRSGMDDIEEGQDEAHANYISLE.

One can recognise an EamA domain in the interval 25–153 (IAAALLHALA…TALAGVVLVL (129 aa)). Helical transmembrane passes span 49–69 (PFTVLQIRLFITVLGCTAYLW), 89–109 (AAGGVFGACGFYLSISYLSLS), 111–131 (ATVLNFIAPLGAIMLTTYWEG), 133–153 (TFAFLDLIACITALAGVVLVL), 179–199 (LKGVVSGITGVAGGIVAFSAM), 215–235 (FGVSICIVTTAFSTIMPEVVW), 244–264 (LLAIIGILGLVMEYLLTAGLG), 269–289 (RVTIMIYSQVLWALFLDWAIW), and 294–314 (NVLTVLGSMVVVASLAVPYLF).

It belongs to the TPT transporter family. SLC35D subfamily.

Its subcellular location is the membrane. Its function is as follows. Probable transporter; part of the gene cluster that mediates the biosynthesis of the secondary metabolite victorin, the molecular basis for Victoria blight of oats. This chain is Probable transporter vicT, found in Bipolaris victoriae (strain FI3) (Victoria blight of oats agent).